A 302-amino-acid chain; its full sequence is Pseudouridine-5'-phosphate glycosidase (302 aa).

The active-site Proton donor is the Glu-25. The substrate site is built by Lys-86 and Val-106. Asp-138 contacts Mn(2+). 140–142 (SAD) lines the substrate pocket. The active-site Nucleophile is the Lys-159.

The protein belongs to the pseudouridine-5'-phosphate glycosidase family. In terms of assembly, homotrimer. It depends on Mn(2+) as a cofactor.

The enzyme catalyses D-ribose 5-phosphate + uracil = psi-UMP + H2O. In terms of biological role, catalyzes the reversible cleavage of pseudouridine 5'-phosphate (PsiMP) to ribose 5-phosphate and uracil. Functions biologically in the cleavage direction, as part of a pseudouridine degradation pathway. In Glaesserella parasuis serovar 5 (strain SH0165) (Haemophilus parasuis), this protein is Pseudouridine-5'-phosphate glycosidase.